Consider the following 173-residue polypeptide: Crossover junction endodeoxyribonuclease RuvC (173 aa).

Active-site residues include Asp8, Glu67, and Asp139. The Mg(2+) site is built by Asp8, Glu67, and Asp139.

It belongs to the RuvC family. In terms of assembly, homodimer which binds Holliday junction (HJ) DNA. The HJ becomes 2-fold symmetrical on binding to RuvC with unstacked arms; it has a different conformation from HJ DNA in complex with RuvA. In the full resolvosome a probable DNA-RuvA(4)-RuvB(12)-RuvC(2) complex forms which resolves the HJ. Requires Mg(2+) as cofactor.

It is found in the cytoplasm. The enzyme catalyses Endonucleolytic cleavage at a junction such as a reciprocal single-stranded crossover between two homologous DNA duplexes (Holliday junction).. Its function is as follows. The RuvA-RuvB-RuvC complex processes Holliday junction (HJ) DNA during genetic recombination and DNA repair. Endonuclease that resolves HJ intermediates. Cleaves cruciform DNA by making single-stranded nicks across the HJ at symmetrical positions within the homologous arms, yielding a 5'-phosphate and a 3'-hydroxyl group; requires a central core of homology in the junction. The consensus cleavage sequence is 5'-(A/T)TT(C/G)-3'. Cleavage occurs on the 3'-side of the TT dinucleotide at the point of strand exchange. HJ branch migration catalyzed by RuvA-RuvB allows RuvC to scan DNA until it finds its consensus sequence, where it cleaves and resolves the cruciform DNA. This is Crossover junction endodeoxyribonuclease RuvC from Shewanella pealeana (strain ATCC 700345 / ANG-SQ1).